Consider the following 818-residue polypeptide: Glycerol-3-phosphate acyltransferase (818 aa).

An HXXXXD motif motif is present at residues 308–313; it reads CHRSHM.

It belongs to the GPAT/DAPAT family.

Its subcellular location is the cell inner membrane. The enzyme catalyses sn-glycerol 3-phosphate + an acyl-CoA = a 1-acyl-sn-glycero-3-phosphate + CoA. The protein operates within phospholipid metabolism; CDP-diacylglycerol biosynthesis; CDP-diacylglycerol from sn-glycerol 3-phosphate: step 1/3. The protein is Glycerol-3-phosphate acyltransferase of Alteromonas mediterranea (strain DSM 17117 / CIP 110805 / LMG 28347 / Deep ecotype).